The sequence spans 94 residues: Large ribosomal subunit protein bL27 (94 aa).

Residues 1-9 (MLKMNLQFF) constitute a propeptide that is removed on maturation.

The protein belongs to the bacterial ribosomal protein bL27 family. The N-terminus is cleaved by ribosomal processing cysteine protease Prp.

The sequence is that of Large ribosomal subunit protein bL27 from Halalkalibacterium halodurans (strain ATCC BAA-125 / DSM 18197 / FERM 7344 / JCM 9153 / C-125) (Bacillus halodurans).